The chain runs to 709 residues: Protein transport protein SEC39 (709 aa).

Belongs to the SEC39 family. Component of a peripheral membrane protein complex consisting of DSL1, SEC39/DSL3 and TIP20. Bound to a SNARE complex consisting of UFE1, USE1, SEC20 and SEC22 or YKT6 through direct interaction of TIP20 with SEC20. Interacts with TIP20 and DSL1.

The protein localises to the endoplasmic reticulum membrane. Required for protein transport between the Golgi and the endoplasmic reticulum. May contribute to tethering of coatomer-coated retrograde transport vesicles to the ER membrane through interaction with and stabilization of the SNARE complex. This chain is Protein transport protein SEC39, found in Saccharomyces cerevisiae (strain ATCC 204508 / S288c) (Baker's yeast).